A 596-amino-acid polypeptide reads, in one-letter code: Elongation factor 4 (596 aa).

Positions 2 to 183 constitute a tr-type G domain; the sequence is KNIRNFSIIA…EIIRRIPAPN (182 aa). Residues 14–19 and 130–133 each bind GTP; these read DHGKST and NKID.

It belongs to the TRAFAC class translation factor GTPase superfamily. Classic translation factor GTPase family. LepA subfamily.

The protein localises to the cell inner membrane. The catalysed reaction is GTP + H2O = GDP + phosphate + H(+). Its function is as follows. Required for accurate and efficient protein synthesis under certain stress conditions. May act as a fidelity factor of the translation reaction, by catalyzing a one-codon backward translocation of tRNAs on improperly translocated ribosomes. Back-translocation proceeds from a post-translocation (POST) complex to a pre-translocation (PRE) complex, thus giving elongation factor G a second chance to translocate the tRNAs correctly. Binds to ribosomes in a GTP-dependent manner. This Wolinella succinogenes (strain ATCC 29543 / DSM 1740 / CCUG 13145 / JCM 31913 / LMG 7466 / NCTC 11488 / FDC 602W) (Vibrio succinogenes) protein is Elongation factor 4.